We begin with the raw amino-acid sequence, 458 residues long: MKSNFSKFKDFIKYKKVAVVGIGVSNRPLIKFLVKLGAKVTAFDKKHREKLGSISLELEEIGVDLVLGENYLDKLDGYDVIFKTPSMRIDRPEFVKAKEAGAYITSEMEEFIKYCPAKVFGITGSDGKTTTTTLVYEMLKKEGYRTWVGGNIGTPLFANIEEMKEDHMVVLELSSFQLMTMDVSPEISLITNLSPNHLDVHKDFEEYVWAKKNIFKYQSSDNLLVLNKDDDLTNGMENEALGDVLKFSLVEKVYNGACLSNNKLTIQGKEICDSKDIKLKGRHNIANLLAAFCMVNKYVSIDSMKYVATNFSGVEHRCEFIREVNEVKYYNDSIASSPSRTLAGLNSFEKPVILIAGGYDKKIPFEPLAEGGYDKIKILILMGDTKNKIKSAFEKVISHKKCEMEIVIVNSMEEAVKVADNMAEKGDIITLSPACASFDMYPNFEIRGNEFKNIVNSL.

Glycine 124–threonine 130 is a binding site for ATP.

Belongs to the MurCDEF family.

It is found in the cytoplasm. It catalyses the reaction UDP-N-acetyl-alpha-D-muramoyl-L-alanine + D-glutamate + ATP = UDP-N-acetyl-alpha-D-muramoyl-L-alanyl-D-glutamate + ADP + phosphate + H(+). It functions in the pathway cell wall biogenesis; peptidoglycan biosynthesis. In terms of biological role, cell wall formation. Catalyzes the addition of glutamate to the nucleotide precursor UDP-N-acetylmuramoyl-L-alanine (UMA). The polypeptide is UDP-N-acetylmuramoylalanine--D-glutamate ligase (Clostridium botulinum (strain Loch Maree / Type A3)).